Reading from the N-terminus, the 455-residue chain is Nucleoprotein (455 aa).

Residues 1–62 form a disordered region; that stretch reads MSFVPGQENA…ATTQPNSGSV (62 aa). The segment covering 9-23 has biased composition (low complexity); the sequence is NAGSRSSSGNRAGNG. 2 stretches are compositionally biased toward polar residues: residues 30–42 and 49–61; these read WADQ…NNQN and PKQT…NSGS. Positions 56–197 are RNA-binding; sequence QPNSGSVVPH…GFYVEGSGRS (142 aa). The 130-residue stretch at 64 to 193 folds into the CoV N NTD domain; sequence PHYSWFSGIT…VLPQGFYVEG (130 aa). RNA is bound by residues R109, R125, and R167. Disordered stretches follow at residues 159–230, 271–290, and 382–429; these read RTSA…STVK, PRQK…FGKR, and QDGG…RELT. The residue at position 170 (S170) is a Phosphoserine; by host. T177 carries the phosphothreonine; by host modification. Residues 193 to 212 show a composition bias toward low complexity; that stretch reads GSGRSAPASRSGSRPQSRGP. S194 is subject to Phosphoserine; by host. Positions 215–227 are enriched in polar residues; that stretch reads RARSSSNQRQPAS. The 124-residue stretch at 260 to 383 folds into the CoV N CTD domain; it reads AKEVRQKILN…ENLNAYQNQD (124 aa). The interval 267–384 is dimerization; it reads ILNKPRQKRT…NLNAYQNQDG (118 aa). Residue S390 is modified to Phosphoserine; by host. The segment covering 393–402 has biased composition (basic residues); that stretch reads PQRKRGTKQK. S425 is subject to Phosphoserine; by host. Residue T429 is modified to Phosphothreonine; by host.

This sequence belongs to the betacoronavirus nucleocapsid protein family. In terms of assembly, homooligomer. Both monomeric and oligomeric forms interact with RNA. Interacts with protein M. Interacts with NSP3; this interaction serves to tether the genome to the newly translated replicase-transcriptase complex at a very early stage of infection. Interacts (when phosphorylated) with host DDX1; this interaction is essential to produce a full set of subgenomic and genomic RNAs. ADP-ribosylated. The ADP-ribosylation is retained in the virion during infection. In terms of processing, phosphorylated on serine and threonine residues. Phosphorylated by host GSK3A and GSK3B. Phosphorylation allows recruitment of host RNA helicase DDX1 which facilitates template readthrough and enables longer subgenomic mRNA synthesis.

The protein localises to the virion. It is found in the host endoplasmic reticulum-Golgi intermediate compartment. It localises to the host Golgi apparatus. Functionally, packages the positive strand viral genome RNA into a helical ribonucleocapsid (RNP) and plays a fundamental role during virion assembly through its interactions with the viral genome and membrane protein M. Plays an important role in enhancing the efficiency of subgenomic viral RNA transcription as well as viral replication. The chain is Nucleoprotein from Murine coronavirus (strain JHM) (MHV-JHM).